The chain runs to 316 residues: 4-diphosphocytidyl-2-C-methyl-D-erythritol kinase (316 aa).

Lysine 32 is an active-site residue. 126-136 (PVGAGLGGGSA) is a binding site for ATP. Aspartate 168 is an active-site residue.

Belongs to the GHMP kinase family. IspE subfamily.

The enzyme catalyses 4-CDP-2-C-methyl-D-erythritol + ATP = 4-CDP-2-C-methyl-D-erythritol 2-phosphate + ADP + H(+). Its pathway is isoprenoid biosynthesis; isopentenyl diphosphate biosynthesis via DXP pathway; isopentenyl diphosphate from 1-deoxy-D-xylulose 5-phosphate: step 3/6. Catalyzes the phosphorylation of the position 2 hydroxy group of 4-diphosphocytidyl-2C-methyl-D-erythritol. The polypeptide is 4-diphosphocytidyl-2-C-methyl-D-erythritol kinase (Bifidobacterium longum subsp. infantis (strain ATCC 15697 / DSM 20088 / JCM 1222 / NCTC 11817 / S12)).